Consider the following 182-residue polypeptide: uncharacterized protein (182 aa).

Disordered regions lie at residues 1-73 (MMSG…YRSL) and 105-182 (SMST…HLNR). Composition is skewed to low complexity over residues 43 to 68 (RPSPFLSPSSSSSQTSISPTPTETSS) and 105 to 121 (SMSTLELSSSTLSSPVT). Residues 122 to 131 (APAPPPPPTS) show a composition bias toward pro residues.

This is an uncharacterized protein from Caenorhabditis elegans.